The sequence spans 144 residues: Maximins 6/Hv (144 aa).

The N-terminal stretch at 1 to 18 (MNFKYIVAVSFLIASGYA) is a signal peptide. Positions 19-43 (RSEENDVQSLSQREVLEEETLREIR) are excised as a propeptide. The residue at position 70 (Asn-70) is an Asparagine amide. Positions 74 to 123 (TAKGHEVMKRLEAVMRDLDSLDHPEEASERETRGFNQEEIANLFTKKEKR) are excised as a propeptide. Ile-143 is subject to Isoleucine amide.

The protein belongs to the bombinin family. As to expression, expressed by the skin glands.

The protein resides in the secreted. Its function is as follows. Shows antimicrobial activity against bacteria and against the fungus C.albicans. It has little hemolytic activity. In terms of biological role, shows antimicrobial activity against bacteria and against the fungus C.albicans. Shows strong hemolytic activity. The protein is Maximins 6/Hv of Bombina maxima (Giant fire-bellied toad).